The sequence spans 455 residues: Anaerobic glycerol-3-phosphate dehydrogenase subunit B (455 aa).

It belongs to the anaerobic G-3-P dehydrogenase subunit B family. Composed of a catalytic GlpA/B dimer and of membrane bound GlpC. It depends on FMN as a cofactor.

It catalyses the reaction a quinone + sn-glycerol 3-phosphate = dihydroxyacetone phosphate + a quinol. It functions in the pathway polyol metabolism; glycerol degradation via glycerol kinase pathway; glycerone phosphate from sn-glycerol 3-phosphate (anaerobic route): step 1/1. Conversion of glycerol 3-phosphate to dihydroxyacetone. Uses fumarate or nitrate as electron acceptor. The polypeptide is Anaerobic glycerol-3-phosphate dehydrogenase subunit B (Aliivibrio fischeri (strain MJ11) (Vibrio fischeri)).